A 321-amino-acid polypeptide reads, in one-letter code: 1D-myo-inositol 2-acetamido-2-deoxy-alpha-D-glucopyranoside deacetylase (321 aa).

Zn(2+) contacts are provided by His15, Asp18, and His150. Residues 280-321 are disordered; that stretch reads PEGERESDLFAGLPPATDGTGAAGAPSATGAANPADAEGGAA. The span at 290–321 shows a compositional bias: low complexity; the sequence is AGLPPATDGTGAAGAPSATGAANPADAEGGAA.

It belongs to the MshB deacetylase family. Zn(2+) is required as a cofactor.

The enzyme catalyses 1D-myo-inositol 2-acetamido-2-deoxy-alpha-D-glucopyranoside + H2O = 1D-myo-inositol 2-amino-2-deoxy-alpha-D-glucopyranoside + acetate. Catalyzes the deacetylation of 1D-myo-inositol 2-acetamido-2-deoxy-alpha-D-glucopyranoside (GlcNAc-Ins) in the mycothiol biosynthesis pathway. The polypeptide is 1D-myo-inositol 2-acetamido-2-deoxy-alpha-D-glucopyranoside deacetylase (Streptomyces griseus subsp. griseus (strain JCM 4626 / CBS 651.72 / NBRC 13350 / KCC S-0626 / ISP 5235)).